Here is a 188-residue protein sequence, read N- to C-terminus: ATP synthase subunit b 2 (188 aa).

The segment at Met-1 to Ala-23 is disordered. Positions Ala-8 to Asp-18 are enriched in low complexity. Residues Leu-37 to Pro-57 form a helical membrane-spanning segment.

Belongs to the ATPase B chain family. F-type ATPases have 2 components, F(1) - the catalytic core - and F(0) - the membrane proton channel. F(1) has five subunits: alpha(3), beta(3), gamma(1), delta(1), epsilon(1). F(0) has three main subunits: a(1), b(2) and c(10-14). The alpha and beta chains form an alternating ring which encloses part of the gamma chain. F(1) is attached to F(0) by a central stalk formed by the gamma and epsilon chains, while a peripheral stalk is formed by the delta and b chains.

The protein resides in the cell inner membrane. Its function is as follows. F(1)F(0) ATP synthase produces ATP from ADP in the presence of a proton or sodium gradient. F-type ATPases consist of two structural domains, F(1) containing the extramembraneous catalytic core and F(0) containing the membrane proton channel, linked together by a central stalk and a peripheral stalk. During catalysis, ATP synthesis in the catalytic domain of F(1) is coupled via a rotary mechanism of the central stalk subunits to proton translocation. In terms of biological role, component of the F(0) channel, it forms part of the peripheral stalk, linking F(1) to F(0). The b'-subunit is a diverged and duplicated form of b found in plants and photosynthetic bacteria. This Rhodopseudomonas palustris (strain BisB18) protein is ATP synthase subunit b 2 (atpF2).